The sequence spans 302 residues: RELT-like protein 2 (302 aa).

The chain crosses the membrane as a helical span at residues 15–35 (LYMLFLLVLVFFLMGLVGFMI). Disordered regions lie at residues 47–68 (RTSR…DDVN), 135–164 (CSRS…TTVF), 177–212 (RYGL…GQPR), and 247–302 (VPCT…AGGM). A Phosphoserine modification is found at S52. 2 stretches are compositionally biased toward basic and acidic residues: residues 148–158 (RSKEGKGRPRP) and 177–188 (RYGLHEHRDGSP). The segment covering 277–294 (QEANGQPTKLDTSGQQDS) has biased composition (polar residues).

Belongs to the RELT family. In terms of assembly, interacts with RELT, RELL1, OXSR1, PLSCR1 and TRAF2.

The protein resides in the cell membrane. In terms of biological role, induces activation of MAPK14/p38 cascade, when overexpressed. Induces apoptosis, when overexpressed. The polypeptide is RELT-like protein 2 (Rell2) (Rattus norvegicus (Rat)).